Reading from the N-terminus, the 782-residue chain is E3 ubiquitin-protein ligase SopA (782 aa).

The disordered stretch occupies residues 136-171 (GVSVSANNRPTVSEGRTPPVSPSLSLQATSSPSSPA). The span at 157–171 (PSLSLQATSSPSSPA) shows a compositional bias: low complexity. Cys753 functions as the Glycyl thioester intermediate in the catalytic mechanism.

Belongs to the SopA E3 ligase family. In terms of processing, ubiquitinated in the presence of host E1 ubiquitin-activating enzyme, E2 ubiquitin-conjugating enzyme and ubiquitin.

It is found in the secreted. The protein localises to the host cell. It carries out the reaction S-ubiquitinyl-[E2 ubiquitin-conjugating enzyme]-L-cysteine + [acceptor protein]-L-lysine = [E2 ubiquitin-conjugating enzyme]-L-cysteine + N(6)-ubiquitinyl-[acceptor protein]-L-lysine.. Effector proteins function to alter host cell physiology and promote bacterial survival in host tissues. This protein is an E3 ubiquitin ligase that interferes with host's ubiquitination pathway. For instance, prevents host innate immune response by ubiquitinating and thus sending to degradation host E3 ubiquitin ligases TRIM56 and TRIM65. This chain is E3 ubiquitin-protein ligase SopA (sopA), found in Salmonella typhimurium (strain D23580).